We begin with the raw amino-acid sequence, 397 residues long: Elongation factor Tu (397 aa).

The tr-type G domain occupies 10–206 (KPHCNIGTIG…AVDEYIPQPE (197 aa)). The tract at residues 19 to 26 (GHIDHGKT) is G1. 19–26 (GHIDHGKT) is a binding site for GTP. A Mg(2+)-binding site is contributed by T26. A G2 region spans residues 62 to 66 (GITIS). The interval 83-86 (DCPG) is G3. GTP-binding positions include 83 to 87 (DCPGH) and 138 to 141 (NKCD). The interval 138 to 141 (NKCD) is G4. The G5 stretch occupies residues 176-178 (SAF).

The protein belongs to the TRAFAC class translation factor GTPase superfamily. Classic translation factor GTPase family. EF-Tu/EF-1A subfamily. In terms of assembly, monomer.

It is found in the cytoplasm. The catalysed reaction is GTP + H2O = GDP + phosphate + H(+). Functionally, GTP hydrolase that promotes the GTP-dependent binding of aminoacyl-tRNA to the A-site of ribosomes during protein biosynthesis. This chain is Elongation factor Tu, found in Cutibacterium acnes (strain DSM 16379 / KPA171202) (Propionibacterium acnes).